The chain runs to 204 residues: DNA-directed RNA polymerase subunit gamma (204 aa).

Zn(2+) contacts are provided by C34, C36, C49, and C52.

The protein belongs to the RNA polymerase beta' chain family. RpoC1 subfamily. In terms of assembly, in cyanobacteria the RNAP catalytic core is composed of 2 alpha, 1 beta, 1 beta', 1 gamma and 1 omega subunit. When a sigma factor is associated with the core the holoenzyme is formed, which can initiate transcription. It depends on Zn(2+) as a cofactor.

It carries out the reaction RNA(n) + a ribonucleoside 5'-triphosphate = RNA(n+1) + diphosphate. Functionally, DNA-dependent RNA polymerase catalyzes the transcription of DNA into RNA using the four ribonucleoside triphosphates as substrates. This is DNA-directed RNA polymerase subunit gamma (rpoC1) from Synechococcus sp. (strain WH8103).